The following is a 465-amino-acid chain: Lactaldehyde dehydrogenase (465 aa).

Residue 220–225 (GSVEVG) coordinates NAD(+). Residues E240 and C274 contribute to the active site.

The protein belongs to the aldehyde dehydrogenase family. Homotetramer.

It carries out the reaction (S)-lactaldehyde + NAD(+) + H2O = (S)-lactate + NADH + 2 H(+). The protein operates within cofactor biosynthesis; coenzyme F420 biosynthesis. Its function is as follows. Involved in F420 biosynthesis through the oxidation of lactaldehyde to lactate. This chain is Lactaldehyde dehydrogenase, found in Methanococcus maripaludis (strain DSM 14266 / JCM 13030 / NBRC 101832 / S2 / LL).